An 822-amino-acid polypeptide reads, in one-letter code: ATP-dependent zinc metalloprotease FTSH 8, mitochondrial (822 aa).

Over residues Met1 to Phe25 the composition is skewed to low complexity. Disordered regions lie at residues Met1–Gly50, Asn103–Asp131, and Ser202–Asp221. The N-terminal 93 residues, Met1–Phe93, are a transit peptide targeting the mitochondrion. The segment covering Gly108–Ser127 has biased composition (basic and acidic residues). An ATP-binding site is contributed by Gly375 to Thr382. His600 lines the Zn(2+) pocket. The active site involves Glu601. Zn(2+)-binding residues include His604 and Asp676. The tract at residues Pro781 to Thr822 is disordered.

It in the N-terminal section; belongs to the AAA ATPase family. The protein in the C-terminal section; belongs to the peptidase M41 family. Zn(2+) serves as cofactor.

The protein localises to the mitochondrion. Its function is as follows. Probable ATP-dependent zinc metallopeptidase. This Oryza sativa subsp. japonica (Rice) protein is ATP-dependent zinc metalloprotease FTSH 8, mitochondrial (FTSH8).